A 554-amino-acid chain; its full sequence is Glucose-6-phosphate isomerase (554 aa).

Glu-359 functions as the Proton donor in the catalytic mechanism. Residues His-390 and Lys-518 contribute to the active site.

The protein belongs to the GPI family.

It is found in the cytoplasm. The catalysed reaction is alpha-D-glucose 6-phosphate = beta-D-fructose 6-phosphate. It functions in the pathway carbohydrate biosynthesis; gluconeogenesis. It participates in carbohydrate degradation; glycolysis; D-glyceraldehyde 3-phosphate and glycerone phosphate from D-glucose: step 2/4. Functionally, catalyzes the reversible isomerization of glucose-6-phosphate to fructose-6-phosphate. This Pseudomonas fluorescens (strain ATCC BAA-477 / NRRL B-23932 / Pf-5) protein is Glucose-6-phosphate isomerase.